A 385-amino-acid polypeptide reads, in one-letter code: Acyl-CoA dehydrogenase IpdE1 (385 aa).

Residues 126 to 129 and S161 each bind FAD; that span reads QGYS. The active-site Proton acceptor is the E244. 364–366 provides a ligand contact to FAD; sequence SNE.

The protein belongs to the acyl-CoA dehydrogenase family. Heterotetramer composed of 2 IpdE1 subunits and 2 IpdE2 subunits. The cofactor is FAD.

It carries out the reaction 3-[(3aS,4S,5R,7aS)-5-hydroxy-7a-methyl-1-oxo-octahydro-1H-inden-4-yl]propanoyl-CoA + A = (2E)-3-[(3aS,4S,5R,7aS)-5-hydroxy-7a-methyl-1-oxo-octahydro-1H-inden-4-yl]prop-2-enoyl-CoA + AH2. It participates in steroid metabolism; cholesterol degradation. Involved in cholesterol degradation. Catalyzes the dehydrogenation of 5OH-HIP-CoA to 5OH-HIPE-CoA. Can also use octanoyl-CoA and dihydroferuloyl-CoA, with lower efficiency. Cannot use 3-oxo-4-pregnene-20-carboxyl-CoA (3-OPC-CoA). The chain is Acyl-CoA dehydrogenase IpdE1 from Mycobacterium tuberculosis (strain ATCC 25618 / H37Rv).